Consider the following 588-residue polypeptide: Thioredoxin domain-containing protein 3 (588 aa).

The 118-residue stretch at 2-119 (ASKKREVQLQ…VINLIDEERK (118 aa)) folds into the Thioredoxin domain. The cysteines at positions 39 and 42 are disulfide-linked. NDK regions lie at residues 157–257 (IAII…DQPE), 315–455 (LEKT…STLG), and 456–588 (LIKP…PEEN). The interval 230-261 (GSKHNPPSEETEPQTDTEPNERSEDQPEVEAQ) is disordered.

The protein in the C-terminal section; belongs to the NDK family. As to quaternary structure, monomer. Testis-specific. Expressed only in primary spermatocytes and round spermatids.

The protein localises to the cytoplasm. In terms of biological role, probably required during the final stages of sperm tail maturation in the testis and/or epididymis, where extensive disulfide bonding of fibrous sheath (FS) proteins occurs. In vitro, it has neither nucleoside diphosphate kinase (NDPK) activity nor reducing activity on disulfide bonds. Exhibits a 3'-5' exonuclease activity with a preference for single-stranded DNA, suggesting roles in DNA proofreading and repair. The polypeptide is Thioredoxin domain-containing protein 3 (Homo sapiens (Human)).